The following is a 689-amino-acid chain: Collagen alpha-2(IX) chain (689 aa).

Positions 1 to 23 are cleaved as a signal peptide; the sequence is MAAATASPRSLLVLLQVVVLALA. The interval 26–518 is disordered; sequence RGPPGERGPP…QPGRQGVEGR (493 aa). The triple-helical region 4 (COL4) stretch occupies residues 27–163; that stretch reads GPPGERGPPG…PGKPGRPGTI (137 aa). Over residues 31–43 the composition is skewed to pro residues; the sequence is ERGPPGPPGPPGV. Residues 44 to 56 show a composition bias toward low complexity; the sequence is PGSDGIDGDNGPP. Composition is skewed to pro residues over residues 106-127 and 144-157; these read LPGP…PGPV and PDGP…PGKP. Pro160 bears the 4-hydroxyproline mark. The nonhelical region 4 (NC4) stretch occupies residues 164–180; it reads QGLEGSADFLCPTNCPP. Ser169 carries O-linked (Xyl...) (glycosaminoglycan) serine glycosylation. The triple-helical region 3 (COL3) stretch occupies residues 181–519; it reads GMKGPPGLQG…PGRQGVEGRD (339 aa). Lys183 is subject to 5-hydroxylysine. O-linked (Gal...) hydroxylysine glycosylation is present at Lys183. Positions 343-352 are enriched in gly residues; sequence GTKGGPGDQG. 2 stretches are compositionally biased toward low complexity: residues 353-366 and 393-413; these read EPGP…SGPP and RGPV…EQGP. Positions 520-549 are nonhelical region 3 (NC3); that stretch reads ATDQHIVDVALKMLQEQLAEVAVSAKREAL. A triple-helical region 2 (COL2) region spans residues 550–632; the sequence is GAVGMMGPPG…PGLPGRPGQA (83 aa). A disordered region spans residues 554–663; sequence MMGPPGPPGP…LPGPVGLPGF (110 aa). Positions 557–566 are enriched in pro residues; it reads PPGPPGPPGY. Residues 599–611 show a composition bias toward basic and acidic residues; that stretch reads KRGEKGDPGEVGR. The segment at 633–634 is nonhelical region 2 (NC2); the sequence is IN. A triple-helical region 1 (COL1) region spans residues 635–664; that stretch reads GKDGDRGSPGAPGEAGRPGLPGPVGLPGFC. Residues 665-689 form a nonhelical region 1 (NC1) region; it reads EPAACLGASAYASARLTEPGSIKGP.

Belongs to the fibril-associated collagens with interrupted helices (FACIT) family. In terms of assembly, heterotrimer of an alpha 1(IX), an alpha 2(IX) and an alpha 3(IX) chain. The chains are linked to each other by interchain disulfide bonds. Trimers are also cross-linked via hydroxylysines. Post-translationally, covalently linked to the telopeptides of type II collagen by lysine-derived cross-links. In terms of processing, prolines at the third position of the tripeptide repeating unit (G-X-Y) are hydroxylated in some or all of the chains.

It localises to the secreted. The protein resides in the extracellular space. It is found in the extracellular matrix. In terms of biological role, structural component of hyaline cartilage and vitreous of the eye. In Homo sapiens (Human), this protein is Collagen alpha-2(IX) chain.